Here is a 500-residue protein sequence, read N- to C-terminus: Maintenance of mitochondrial morphology protein 1 (500 aa).

Over 1 to 42 the chain is Lumenal; that stretch reads MATQVATPLSPSYTSELIIVCHHVLQHSPTPLTPHSLSFTQG. The chain crosses the membrane as a helical span at residues 43–63; that stretch reads FLLGQLSIALLIFFFIKFFIF. Residues 64 to 500 lie on the Cytoplasmic side of the membrane; it reads GEPPSADDRS…PGALAPGTFR (437 aa). Positions 141–375 constitute an SMP-LTD domain; that stretch reads QPESLDWFNV…EPRFQQIVLP (235 aa). Low complexity-rich tracts occupy residues 283-294 and 302-316; these read SSSPPSTSTTTP and NSTTSSSTSPPHRPT. 2 disordered regions span residues 283 to 316 and 406 to 500; these read SSSPPSTSTTTPNPEHHRSNSTTSSSTSPPHRPT and EEEE…GTFR. Positions 406-415 are enriched in acidic residues; sequence EEEEEEEEDG. A compositionally biased stretch (basic and acidic residues) spans 438–471; it reads EGAKLREAEIRAGVRKQERPGMSRAQTSREEGVR.

Belongs to the MMM1 family. In terms of assembly, homodimer. Component of the ER-mitochondria encounter structure (ERMES) or MDM complex, composed of MMM1, MDM10, MDM12 and MDM34. An MMM1 homodimer associates with one molecule of MDM12 on each side in a pairwise head-to-tail manner, and the SMP-LTD domains of MMM1 and MDM12 generate a continuous hydrophobic tunnel for phospholipid trafficking.

It localises to the endoplasmic reticulum membrane. Functionally, component of the ERMES/MDM complex, which serves as a molecular tether to connect the endoplasmic reticulum (ER) and mitochondria. Components of this complex are involved in the control of mitochondrial shape and protein biogenesis, and function in nonvesicular lipid trafficking between the ER and mitochondria. The MDM12-MMM1 subcomplex functions in the major beta-barrel assembly pathway that is responsible for biogenesis of all outer membrane beta-barrel proteins, and acts in a late step after the SAM complex. The MDM10-MDM12-MMM1 subcomplex further acts in the TOM40-specific pathway after the action of the MDM12-MMM1 complex. Essential for establishing and maintaining the structure of mitochondria and maintenance of mtDNA nucleoids. This chain is Maintenance of mitochondrial morphology protein 1, found in Phaeosphaeria nodorum (strain SN15 / ATCC MYA-4574 / FGSC 10173) (Glume blotch fungus).